A 322-amino-acid polypeptide reads, in one-letter code: Putative membrane-bound redox modulator Alx (322 aa).

The Periplasmic portion of the chain corresponds to 1 to 6 (MNTVGT). The chain crosses the membrane as a helical span at residues 7-27 (PLLWGGFAVVVVIMLSIDLLL). Over 28 to 43 (QGRRGAHAMSMKQAAG) the chain is Cytoplasmic. The helical transmembrane segment at 44–64 (WSILWVTLSLLFNAAFWWYLA) threads the bilayer. Topologically, residues 65-89 (ETQGREVADPQALAFLTGYLIEKSL) are periplasmic. Residues 90 to 110 (AVDNVFVWLMLFSYFSVPPAL) form a helical membrane-spanning segment. The Cytoplasmic segment spans residues 111 to 113 (QRR). A helical membrane pass occupies residues 114–134 (VLVYGVLGAIVLRTIMIFAGT). Trp135 is a topological domain (periplasmic). Residues 136-156 (LITQFEWLLYVFGAFLLFTGV) traverse the membrane as a helical segment. Residues 157 to 198 (KMALAKEDESGIGEKPMVRWLRGHLRMTDTIENEHFFVRKNG) are Cytoplasmic-facing. The chain crosses the membrane as a helical span at residues 199-219 (LLYATPLLLVLIMVEFSDVIF). Over 220–225 (AVDSIP) the chain is Periplasmic. The helical transmembrane segment at 226–246 (AIFAVTTDPFIVLTSNLFAIL) threads the bilayer. The Cytoplasmic segment spans residues 247–261 (GLRAMYFLLSGVAER). A helical membrane pass occupies residues 262–282 (FSMLKYGLAVILVFIGIKMLI). At 283–286 (VDFY) the chain is on the periplasmic side. Residues 287–307 (HIPIAISLGVVFGILTITLVI) form a helical membrane-spanning segment. Topologically, residues 308 to 321 (NTWVNHQRDKKLRA) are cytoplasmic.

Belongs to the TerC family.

It is found in the cell inner membrane. Has been proposed to be a redox modulator. This chain is Putative membrane-bound redox modulator Alx (alx), found in Salmonella typhi.